The sequence spans 371 residues: Isopentenyl-diphosphate delta-isomerase (371 aa).

9–10 is a binding site for substrate; that stretch reads RK. FMN contacts are provided by residues Thr-66, 67–69, Ser-100, and Asn-128; that span reads GMT. Substrate is bound at residue 100 to 102; it reads SQR. Residue Gln-167 coordinates substrate. Glu-168 is a Mg(2+) binding site. FMN is bound by residues Lys-199, Ser-224, Thr-229, 278 to 280, and 299 to 300; these read GMR and AL.

It belongs to the IPP isomerase type 2 family. Homooctamer. Dimer of tetramers. Requires FMN as cofactor. NADPH is required as a cofactor. It depends on Mg(2+) as a cofactor.

It is found in the cytoplasm. It carries out the reaction isopentenyl diphosphate = dimethylallyl diphosphate. In terms of biological role, involved in the biosynthesis of isoprenoids. Catalyzes the 1,3-allylic rearrangement of the homoallylic substrate isopentenyl (IPP) to its allylic isomer, dimethylallyl diphosphate (DMAPP). The polypeptide is Isopentenyl-diphosphate delta-isomerase (Pyrococcus horikoshii (strain ATCC 700860 / DSM 12428 / JCM 9974 / NBRC 100139 / OT-3)).